The primary structure comprises 148 residues: Large ribosomal subunit protein uL22 (148 aa).

This sequence belongs to the universal ribosomal protein uL22 family. Part of the 50S ribosomal subunit.

Its function is as follows. This protein binds specifically to 23S rRNA. It makes multiple contacts with different domains of the 23S rRNA in the assembled 50S subunit and ribosome. The globular domain of the protein is located near the polypeptide exit tunnel on the outside of the subunit, while an extended beta-hairpin is found that lines the wall of the exit tunnel in the center of the 70S ribosome. This chain is Large ribosomal subunit protein uL22, found in Thermoplasma volcanium (strain ATCC 51530 / DSM 4299 / JCM 9571 / NBRC 15438 / GSS1).